The chain runs to 201 residues: Peptidyl-tRNA hydrolase (201 aa).

Residue Tyr-17 coordinates tRNA. The active-site Proton acceptor is His-22. Phe-76, Asn-78, and Asn-124 together coordinate tRNA.

It belongs to the PTH family. In terms of assembly, monomer.

The protein localises to the cytoplasm. It carries out the reaction an N-acyl-L-alpha-aminoacyl-tRNA + H2O = an N-acyl-L-amino acid + a tRNA + H(+). Functionally, hydrolyzes ribosome-free peptidyl-tRNAs (with 1 or more amino acids incorporated), which drop off the ribosome during protein synthesis, or as a result of ribosome stalling. Its function is as follows. Catalyzes the release of premature peptidyl moieties from peptidyl-tRNA molecules trapped in stalled 50S ribosomal subunits, and thus maintains levels of free tRNAs and 50S ribosomes. The sequence is that of Peptidyl-tRNA hydrolase from Nitratidesulfovibrio vulgaris (strain ATCC 29579 / DSM 644 / CCUG 34227 / NCIMB 8303 / VKM B-1760 / Hildenborough) (Desulfovibrio vulgaris).